Here is a 209-residue protein sequence, read N- to C-terminus: Claudin-4 (209 aa).

Residues 1-9 (MASMGLQVT) are Cytoplasmic-facing. Residues 1–103 (MASMGLQVTG…GVLLSVVGGK (103 aa)) form an interaction with EPHA2 region. Residues 10-30 (GIALAVLGWLAVMLCCALPMW) traverse the membrane as a helical segment. Over 31–81 (RVTAFIGSNIVTSQTIWEGLWMNCVVQSTGQMQCKVYDSLLALPQDLQAAR) the chain is Extracellular. A disulfide bond links Cys54 and Cys64. The helical transmembrane segment at 82–102 (ALVIISIIVAALGVLLSVVGG) threads the bilayer. At 103–117 (KCTNCLEDESAKAKT) the chain is on the cytoplasmic side. A helical membrane pass occupies residues 118–138 (MIVAGVVFLLAGLLVIVPVSW). Residues 139 to 160 (TAHNIIQDFYNPLVASGQKREM) lie on the Extracellular side of the membrane. The helical transmembrane segment at 161-181 (GASLYVGWAASGLLLLGGGLL) threads the bilayer. Residues 182–209 (CCNCPPRTDKPYSAKYSAARSAAASNYV) are Cytoplasmic-facing. Tyr208 bears the Phosphotyrosine; by EPHA2 mark. Residues 208–209 (YV) are interactions with TJP1, TJP2 and TJP3.

It belongs to the claudin family. Interacts with EPHA2; phosphorylates CLDN4 and may regulate tight junctions. Directly interacts with TJP1/ZO-1, TJP2/ZO-2 and TJP3/ZO-3. Interacts with CLDN1. Interacts with CLDN8. Post-translationally, phosphorylated. Phosphorylation by EPHA2 is stimulated by EFNA1 and alters interaction with TJP1.

It is found in the cell junction. The protein resides in the tight junction. It localises to the cell membrane. Its function is as follows. Channel-forming tight junction protein that mediates paracellular chloride transport in the kidney. Plays a critical role in the paracellular reabsorption of filtered chloride in the kidney collecting ducts. Claudins play a major role in tight junction-specific obliteration of the intercellular space, through calcium-independent cell-adhesion activity. The sequence is that of Claudin-4 (CLDN4) from Chlorocebus aethiops (Green monkey).